Consider the following 337-residue polypeptide: tRNA N6-adenosine threonylcarbamoyltransferase (337 aa).

Positions 111 and 115 each coordinate Fe cation. Substrate is bound by residues 134–138 (LVSGG), D167, G180, and N272. D300 is a binding site for Fe cation.

This sequence belongs to the KAE1 / TsaD family. The cofactor is Fe(2+).

It is found in the cytoplasm. It catalyses the reaction L-threonylcarbamoyladenylate + adenosine(37) in tRNA = N(6)-L-threonylcarbamoyladenosine(37) in tRNA + AMP + H(+). In terms of biological role, required for the formation of a threonylcarbamoyl group on adenosine at position 37 (t(6)A37) in tRNAs that read codons beginning with adenine. Is involved in the transfer of the threonylcarbamoyl moiety of threonylcarbamoyl-AMP (TC-AMP) to the N6 group of A37, together with TsaE and TsaB. TsaD likely plays a direct catalytic role in this reaction. The sequence is that of tRNA N6-adenosine threonylcarbamoyltransferase from Yersinia enterocolitica serotype O:8 / biotype 1B (strain NCTC 13174 / 8081).